A 317-amino-acid polypeptide reads, in one-letter code: GTP cyclohydrolase MptA (317 aa).

This sequence belongs to the GTP cyclohydrolase IV family. In terms of assembly, homodimer. Fe(2+) is required as a cofactor.

The catalysed reaction is GTP + H2O = 7,8-dihydroneopterin 2',3'-cyclic phosphate + formate + diphosphate + H(+). It participates in cofactor biosynthesis; 5,6,7,8-tetrahydromethanopterin biosynthesis. Its function is as follows. Converts GTP to 7,8-dihydro-D-neopterin 2',3'-cyclic phosphate, the first intermediate in the biosynthesis of coenzyme methanopterin. The protein is GTP cyclohydrolase MptA of Methanococcoides burtonii (strain DSM 6242 / NBRC 107633 / OCM 468 / ACE-M).